A 211-amino-acid chain; its full sequence is Small ribosomal subunit protein uS3 (211 aa).

The KH type-2 domain occupies 16 to 85 (IDEYFKTKLV…NPQIEVKQVE (70 aa)).

This sequence belongs to the universal ribosomal protein uS3 family. Part of the 30S ribosomal subunit.

Functionally, binds the lower part of the 30S subunit head. In Methanococcus maripaludis (strain DSM 14266 / JCM 13030 / NBRC 101832 / S2 / LL), this protein is Small ribosomal subunit protein uS3.